A 195-amino-acid polypeptide reads, in one-letter code: Large ribosomal subunit protein bL32m (195 aa).

The Zn(2+) site is built by C95, C98, C108, and C111.

Belongs to the bacterial ribosomal protein bL32 family. In terms of assembly, component of the mitochondrial large ribosomal subunit (mt-LSU).

The protein localises to the mitochondrion. In terms of biological role, component of the mitochondrial large ribosomal subunit (mt-LSU). The mitochondrial ribosome (mitoribosome) is a large ribonucleoprotein complex responsible for the synthesis of proteins inside mitochondria. The protein is Large ribosomal subunit protein bL32m (mRpL32) of Drosophila melanogaster (Fruit fly).